A 112-amino-acid chain; its full sequence is Small ribosomal subunit protein eS24 (112 aa).

The segment at 88-112 is disordered; sequence RGMAGEEEGNADAQDAPSGDAAEAS.

It belongs to the eukaryotic ribosomal protein eS24 family.

In Methanospirillum hungatei JF-1 (strain ATCC 27890 / DSM 864 / NBRC 100397 / JF-1), this protein is Small ribosomal subunit protein eS24.